Consider the following 546-residue polypeptide: Chaperonin GroEL 2 (546 aa).

ATP is bound by residues 30 to 33, Lys51, 87 to 91, Gly415, 479 to 481, and Asp495; these read TLGP, DGTTT, and NAA. Positions 526 to 546 are disordered; it reads KEDAPMPGGMPGGMGGMGMDM. Over residues 534 to 546 the composition is skewed to gly residues; the sequence is GMPGGMGGMGMDM.

This sequence belongs to the chaperonin (HSP60) family. As to quaternary structure, forms a cylinder of 14 subunits composed of two heptameric rings stacked back-to-back. Interacts with the co-chaperonin GroES.

The protein resides in the cytoplasm. The enzyme catalyses ATP + H2O + a folded polypeptide = ADP + phosphate + an unfolded polypeptide.. Together with its co-chaperonin GroES, plays an essential role in assisting protein folding. The GroEL-GroES system forms a nano-cage that allows encapsulation of the non-native substrate proteins and provides a physical environment optimized to promote and accelerate protein folding. This is Chaperonin GroEL 2 from Burkholderia lata (strain ATCC 17760 / DSM 23089 / LMG 22485 / NCIMB 9086 / R18194 / 383).